Here is a 346-residue protein sequence, read N- to C-terminus: Protein phosphatase 1 regulatory subunit 7 (346 aa).

Residues 1-13 (MADEEGETEVQEM) are compositionally biased toward acidic residues. The segment at 1–46 (MADEEGETEVQEMEVDRRESDESADDEAKEKPDRVDGGVKNGEVPL) is disordered. A compositionally biased stretch (basic and acidic residues) spans 14 to 37 (EVDRRESDESADDEAKEKPDRVDG). LRR repeat units lie at residues 63 to 84 (EAED…EVLK), 85 to 106 (KVKT…EQLV), 107 to 128 (TLTE…ETLR), 129 to 150 (DLQI…ESLS), 151 to 172 (HLQR…GTLT), 173 to 194 (QLRL…DSLR), 195 to 216 (ELDS…ETLT), 217 to 238 (NLTV…QNLV), 239 to 260 (NLRE…ENNN), 261 to 282 (KLTT…KHLS), and 283 to 304 (ELQE…EELS). In terms of domain architecture, LRRCT spans 317–346 (NPLQKDAQYRRKIMLALPSVRQIDATFVRF).

This sequence belongs to the SDS22 family.

The protein resides in the nucleus. Functionally, regulatory subunit of protein phosphatase 1. The polypeptide is Protein phosphatase 1 regulatory subunit 7 (ppp1r7) (Xenopus tropicalis (Western clawed frog)).